The primary structure comprises 309 residues: Olfactory receptor 10V1 (309 aa).

Topologically, residues 1–25 (MEGINKTAKMQFFFRPFSPDPEVQM) are extracellular. N-linked (GlcNAc...) asparagine glycosylation occurs at Asn5. Residues 26–46 (LIFVVFLMMYLTSLGGNATIA) form a helical membrane-spanning segment. The Cytoplasmic portion of the chain corresponds to 47-54 (VIVQINHS). Residues 55 to 75 (LHTPMYFFLANLAVLEIFYTS) traverse the membrane as a helical segment. Residues 76–100 (SITPLALANLLSMGKTPVSITGCGT) are Extracellular-facing. Cysteines 98 and 190 form a disulfide. A helical membrane pass occupies residues 101-121 (QMFFFVFLGGADCVLLVVMAY). Topologically, residues 122 to 140 (DQFIAICHPLRYRLIMSWS) are cytoplasmic. A helical transmembrane segment spans residues 141-161 (LCVELLVGSLVLGFLLSLPLT). Topologically, residues 162–198 (ILIFHLPFCHNDEIYHFYCDMPAVMRLACADTRVHKT) are extracellular. A helical transmembrane segment spans residues 199-218 (ALYIISFIVLSIPLSLISIS). Residues 219–238 (YVFIVVAILRIRSAEGRQQA) are Cytoplasmic-facing. The helical transmembrane segment at 239–259 (YSTCSSHILVVLLQYGCTSFI) threads the bilayer. The Extracellular portion of the chain corresponds to 260-272 (YLSPSSSYSPEMG). A helical transmembrane segment spans residues 273-293 (RVVSVAYTFITPILNPLIYSL). Residues 294 to 309 (RNKELKDALRKALRKF) lie on the Cytoplasmic side of the membrane.

Belongs to the G-protein coupled receptor 1 family.

It is found in the cell membrane. Functionally, odorant receptor. This Homo sapiens (Human) protein is Olfactory receptor 10V1 (OR10V1).